The following is a 417-amino-acid chain: Equilibrative nucleotide transporter 7 (417 aa).

The next 11 helical transmembrane spans lie at 19–39, 54–74, 84–104, 110–130, 143–163, 184–204, 264–284, 293–315, 326–346, 353–373, and 392–412; these read LVCC…LTIT, VLTI…ATKE, IFGY…DLAS, VVAY…DAFV, PDFI…TSVL, LFIG…TLVF, LGIN…GFLY, GDWY…RFIP, KWIT…YFTA, WMLF…VCIF, and MCVF…LWLI.

This sequence belongs to the SLC29A/ENT transporter (TC 2.A.57) family. In terms of tissue distribution, expressed in leaves and flowers.

It is found in the cell membrane. In terms of biological role, nucleoside transporter that can mediate uptake of adenosine, uridine, guanosine or cytidine when expressed in a heterologous system (yeast). The protein is Equilibrative nucleotide transporter 7 (ENT7) of Arabidopsis thaliana (Mouse-ear cress).